The chain runs to 936 residues: MTIPRIRQPRAVIDRKALTVVLEDLAATVTDNRERRARLLAVLKGALGDGRAEVRRRFLEEKGTGAAVFAENSHLMDQIIRLLFDFTTTHVYPRANRTIGEQMTVLAVGGYGRGEMSPQSDVDLLFLLPYKATPLHEQVVEYMLYTLWDMGLKVGHATRSIEECIRQARGDLTIRTAMLETRYLWGDRALYGQLKTKFWTGVVTGTGPDFVEAKLAERDERHLRMGDSRYVLEPNIKDGKGGLRDLHTLLWIARYIYGVSDMRELVELGVLSADAATKFGRARAFLWTVRCHLHYLADRPEERLTFDVQPAIAARMGYTDRNSGRGVERFMKHYFLMAKTVGDLTRIFCAVLEDQQKRRPILSIATLLMRKRNLGDFVLDGGRLAVAGRGAFREHPLQLISLFKVAHDHGLDIHPDTLRLVTEHLPTVTLLRNDAKANALFMEILTSRKDPELALRQLSESGVLARFIPDFGRVTAQMQFDMYHVYTTDEHTIRAIGLLHRLETGALRDRMPAAADAVHKVQSRRALYLAVLLHDIAKGRGGDHSILGAEVAMRLGPRLGMSEEETETVAWLVRHHLDMSRTAFKRDLDDIKTILDFTGLVQSVERLHLLLALTTVDILAVGPAVWNNWKSSLLRELYTHSKDVLTSGFQAEARDKRVAHKREELAAALADWPQASRERYLDLHYPAYWLTFDSATHLRHARMLRRARDAGLTVAVEVLPDPERAVSEVLVATDDHPGLFSKIAGAMALAGVNILDAKITTMSDGGALDIFTVQTLEGHAIEKEERIARLAKTVRDVLTGDLPLEKALRRQPPRLPERTRHLTVPPRVIVDNQASKTHTVIEINGRDRPGFLYAVTRALTDVAVQISSARVSTYGERVVDSFYVKDVFGMKIVHRAKLAQIREALEAAITQTVPRKVEEGAEQGAEKADAGEIVAA.

A uridylyltransferase region spans residues 1 to 372; it reads MTIPRIRQPR…SIATLLMRKR (372 aa). Residues 373–727 are uridylyl-removing; sequence NLGDFVLDGG…VLPDPERAVS (355 aa). In terms of domain architecture, HD spans 488–610; sequence TDEHTIRAIG…VQSVERLHLL (123 aa). ACT domains lie at 728 to 809 and 840 to 915; these read EVLV…KALR and VIEI…TVPR. The span at 915–930 shows a compositional bias: basic and acidic residues; the sequence is RKVEEGAEQGAEKADA. Positions 915-936 are disordered; sequence RKVEEGAEQGAEKADAGEIVAA.

The protein belongs to the GlnD family. The cofactor is Mg(2+).

It catalyses the reaction [protein-PII]-L-tyrosine + UTP = [protein-PII]-uridylyl-L-tyrosine + diphosphate. It carries out the reaction [protein-PII]-uridylyl-L-tyrosine + H2O = [protein-PII]-L-tyrosine + UMP + H(+). Uridylyltransferase (UTase) activity is inhibited by glutamine, while glutamine activates uridylyl-removing (UR) activity. Its function is as follows. Modifies, by uridylylation and deuridylylation, the PII regulatory proteins (GlnB and homologs), in response to the nitrogen status of the cell that GlnD senses through the glutamine level. Under low glutamine levels, catalyzes the conversion of the PII proteins and UTP to PII-UMP and PPi, while under higher glutamine levels, GlnD hydrolyzes PII-UMP to PII and UMP (deuridylylation). Thus, controls uridylylation state and activity of the PII proteins, and plays an important role in the regulation of nitrogen fixation and metabolism. This chain is Bifunctional uridylyltransferase/uridylyl-removing enzyme, found in Rhodospirillum rubrum (strain ATCC 11170 / ATH 1.1.1 / DSM 467 / LMG 4362 / NCIMB 8255 / S1).